The sequence spans 899 residues: Nuclear factor NF-kappa-B p100 subunit (899 aa).

Residues Ser23 and Ser161 each carry the phosphoserine modification. Residues Ala35–Gly224 form the RHD domain. Positions Arg337–Lys341 match the Nuclear localization signal motif. The tract at residues Phe346 to Gly377 is GRR. The disordered stretch occupies residues Gly403–Pro434. The segment covering Ser410 to Thr425 has biased composition (basic and acidic residues). Thr425 carries the post-translational modification Phosphothreonine. ANK repeat units lie at residues Asn487 to Tyr516, Leu526 to Leu555, His559 to Pro590, Glu599 to Ala628, Gly633 to Ala663, and Ala667 to Ala696. Residues Asn698 to Leu734 are disordered. Phosphoserine is present on residues Ser713, Ser715, and Ser717. One copy of the ANK 7 repeat lies at Arg729–Glu755. A Death domain is found at Ala764–Glu851. A Phosphoserine modification is found at Ser812. Residues Glu851 to Ser865 show a composition bias toward basic and acidic residues. The disordered stretch occupies residues Glu851 to His899. Residue Lys855 forms a Glycyl lysine isopeptide (Lys-Gly) (interchain with G-Cter in ubiquitin) linkage. Phosphoserine; by MAP3K14 is present on residues Ser865 and Ser869. The segment covering Gly887 to His899 has biased composition (low complexity).

As to quaternary structure, component of the NF-kappa-B RelB-p52 complex. Homodimer; component of the NF-kappa-B p52-p52 complex. Component of the NF-kappa-B p65-p52 complex. Component of the NF-kappa-B p52-c-Rel complex. NFKB2/p52 interacts with NFKBIE. Component of a complex consisting of the NF-kappa-B p50-p50 homodimer and BCL3. Directly interacts with MEN1. Post-translationally, while translation occurs, the particular unfolded structure after the GRR repeat promotes the generation of p52 making it an acceptable substrate for the proteasome. This process is known as cotranslational processing. The processed form is active and the unprocessed form acts as an inhibitor (I kappa B-like), being able to form cytosolic complexes with NF-kappa B, trapping it in the cytoplasm. Complete folding of the region downstream of the GRR repeat precludes processing. In terms of processing, subsequent to MAP3K14-dependent serine phosphorylation, p100 polyubiquitination occurs then triggering its proteasome-dependent processing. Constitutive processing is tightly suppressed by its C-terminal processing inhibitory domain, named PID, which contains the death domain. Post-translationally, ubiquitinated by TRIM55; leading to processing by VCP and subsequent ubiquitin-dependent protein degradation by the proteasome. As to expression, highly expressed in lymph nodes and thymus.

It localises to the nucleus. It is found in the cytoplasm. Its function is as follows. NF-kappa-B is a pleiotropic transcription factor present in almost all cell types and is the endpoint of a series of signal transduction events that are initiated by a vast array of stimuli related to many biological processes such as inflammation, immunity, differentiation, cell growth, tumorigenesis and apoptosis. NF-kappa-B is a homo- or heterodimeric complex formed by the Rel-like domain-containing proteins RELA/p65, RELB, NFKB1/p105, NFKB1/p50, REL and NFKB2/p52. The dimers bind at kappa-B sites in the DNA of their target genes and the individual dimers have distinct preferences for different kappa-B sites that they can bind with distinguishable affinity and specificity. Different dimer combinations act as transcriptional activators or repressors, respectively. NF-kappa-B is controlled by various mechanisms of post-translational modification and subcellular compartmentalization as well as by interactions with other cofactors or corepressors. NF-kappa-B complexes are held in the cytoplasm in an inactive state complexed with members of the NF-kappa-B inhibitor (I-kappa-B) family. In a conventional activation pathway, I-kappa-B is phosphorylated by I-kappa-B kinases (IKKs) in response to different activators, subsequently degraded thus liberating the active NF-kappa-B complex which translocates to the nucleus. In a non-canonical activation pathway, the MAP3K14-activated CHUK/IKKA homodimer phosphorylates NFKB2/p100 associated with RelB, inducing its proteolytic processing to NFKB2/p52 and the formation of NF-kappa-B RelB-p52 complexes. The NF-kappa-B heterodimeric RelB-p52 complex is a transcriptional activator. The NF-kappa-B p52-p52 homodimer is a transcriptional repressor. NFKB2 appears to have dual functions such as cytoplasmic retention of attached NF-kappa-B proteins by p100 and generation of p52 by a cotranslational processing. The proteasome-mediated process ensures the production of both p52 and p100 and preserves their independent function. p52 binds to the kappa-B consensus sequence 5'-GGRNNYYCC-3', located in the enhancer region of genes involved in immune response and acute phase reactions. p52 and p100 are respectively the minor and major form; the processing of p100 being relatively poor. Isoform p49 is a subunit of the NF-kappa-B protein complex, which stimulates the HIV enhancer in synergy with p65. In concert with RELB, regulates the circadian clock by repressing the transcriptional activator activity of the CLOCK-BMAL1 heterodimer. This Mus musculus (Mouse) protein is Nuclear factor NF-kappa-B p100 subunit (Nfkb2).